A 148-amino-acid polypeptide reads, in one-letter code: Ubiquitin-conjugating enzyme E2 28 (148 aa).

In terms of domain architecture, UBC core spans 1-147 (MASKRILKEL…ARSWTQKYAM (147 aa)). Cysteine 85 functions as the Glycyl thioester intermediate in the catalytic mechanism.

Belongs to the ubiquitin-conjugating enzyme family. As to quaternary structure, interacts with SINAT5. As to expression, expressed in seeds, pistils, siliques, hypocotyls and leaves.

The enzyme catalyses S-ubiquitinyl-[E1 ubiquitin-activating enzyme]-L-cysteine + [E2 ubiquitin-conjugating enzyme]-L-cysteine = [E1 ubiquitin-activating enzyme]-L-cysteine + S-ubiquitinyl-[E2 ubiquitin-conjugating enzyme]-L-cysteine.. It participates in protein modification; protein ubiquitination. Accepts the ubiquitin from the E1 complex and catalyzes its covalent attachment to other proteins. This Arabidopsis thaliana (Mouse-ear cress) protein is Ubiquitin-conjugating enzyme E2 28.